A 119-amino-acid chain; its full sequence is UPF0102 protein FP2501 (119 aa).

The protein belongs to the UPF0102 family.

This is UPF0102 protein FP2501 from Flavobacterium psychrophilum (strain ATCC 49511 / DSM 21280 / CIP 103535 / JIP02/86).